The primary structure comprises 370 residues: Mitogen-activated protein kinase mpkC (370 aa).

The Protein kinase domain maps to 19-298 (YANVRPVGLG…AAESLEHPYL (280 aa)). ATP-binding positions include 25–33 (VGLGAFGLV) and Lys48. Residue Asp140 is the Proton acceptor of the active site. A Phosphothreonine modification is found at Thr170. The TXY motif lies at 170–172 (TGY). Phosphotyrosine is present on Tyr172.

It belongs to the protein kinase superfamily. Ser/Thr protein kinase family. MAP kinase subfamily. HOG1 sub-subfamily. Requires Mg(2+) as cofactor. Dually phosphorylated on Thr-170 and Tyr-172, which activates the enzyme.

The enzyme catalyses L-seryl-[protein] + ATP = O-phospho-L-seryl-[protein] + ADP + H(+). It carries out the reaction L-threonyl-[protein] + ATP = O-phospho-L-threonyl-[protein] + ADP + H(+). Activated by tyrosine and threonine phosphorylation. In terms of biological role, mitogen-activated protein kinase required for growth on media where sorbitol or mannitol is the sole carbon source. The protein is Mitogen-activated protein kinase mpkC (mpkC) of Aspergillus terreus (strain NIH 2624 / FGSC A1156).